Here is a 412-residue protein sequence, read N- to C-terminus: Serine hydroxymethyltransferase (412 aa).

(6S)-5,6,7,8-tetrahydrofolate is bound by residues Leu-119 and 123–125 (GHL). The residue at position 228 (Lys-228) is an N6-(pyridoxal phosphate)lysine.

The protein belongs to the SHMT family. As to quaternary structure, homodimer. Requires pyridoxal 5'-phosphate as cofactor.

Its subcellular location is the cytoplasm. The catalysed reaction is (6R)-5,10-methylene-5,6,7,8-tetrahydrofolate + glycine + H2O = (6S)-5,6,7,8-tetrahydrofolate + L-serine. It participates in one-carbon metabolism; tetrahydrofolate interconversion. Its pathway is amino-acid biosynthesis; glycine biosynthesis; glycine from L-serine: step 1/1. Its function is as follows. Catalyzes the reversible interconversion of serine and glycine with tetrahydrofolate (THF) serving as the one-carbon carrier. This reaction serves as the major source of one-carbon groups required for the biosynthesis of purines, thymidylate, methionine, and other important biomolecules. Also exhibits THF-independent aldolase activity toward beta-hydroxyamino acids, producing glycine and aldehydes, via a retro-aldol mechanism. This Thermodesulfovibrio yellowstonii (strain ATCC 51303 / DSM 11347 / YP87) protein is Serine hydroxymethyltransferase.